The primary structure comprises 479 residues: Endoglucanase 20 (479 aa).

Positions 1 to 21 (MGKLLVLMLVGMFLAFESLEA) are cleaved as a signal peptide. Residue asparagine 29 is glycosylated (N-linked (GlcNAc...) asparagine). Aspartate 76 serves as the catalytic Nucleophile. The active site involves histidine 398. Asparagine 442 carries N-linked (GlcNAc...) asparagine glycosylation. Active-site residues include aspartate 449 and glutamate 458.

It belongs to the glycosyl hydrolase 9 (cellulase E) family.

It localises to the secreted. It catalyses the reaction Endohydrolysis of (1-&gt;4)-beta-D-glucosidic linkages in cellulose, lichenin and cereal beta-D-glucans.. This Arabidopsis thaliana (Mouse-ear cress) protein is Endoglucanase 20.